The following is a 130-amino-acid chain: Small ribosomal subunit protein uS8 (130 aa).

Belongs to the universal ribosomal protein uS8 family. In terms of assembly, part of the 30S ribosomal subunit. Contacts proteins S5 and S12.

One of the primary rRNA binding proteins, it binds directly to 16S rRNA central domain where it helps coordinate assembly of the platform of the 30S subunit. The protein is Small ribosomal subunit protein uS8 of Yersinia pseudotuberculosis serotype O:1b (strain IP 31758).